A 198-amino-acid polypeptide reads, in one-letter code: MEHYISLLIKSIFIENMALSFFLGMCTFLAVSKKVKTSFGLGVAVVVVLTIAVPVNNLVYNLVLKENALVEGVDLSFLNFITFIGVIAALVQILEMILDRFFPPLYNALGIFLPLITVNCAIFGGVSFMVQRDYNFAESVVYGFGAGVGWMLAIVALAGIREKMKYSDVPPGLRGLGITFITVGLMALGFMSFSGVQL.

The next 6 membrane-spanning stretches (helical) occupy residues 11-31, 39-59, 77-97, 110-130, 140-160, and 176-196; these read SIFI…FLAV, FGLG…NNLV, FLNF…LEMI, GIFL…SFMV, VVYG…LAGI, and LGIT…FSGV.

Belongs to the NqrDE/RnfAE family. As to quaternary structure, composed of six subunits; NqrA, NqrB, NqrC, NqrD, NqrE and NqrF.

The protein resides in the cell inner membrane. The enzyme catalyses a ubiquinone + n Na(+)(in) + NADH + H(+) = a ubiquinol + n Na(+)(out) + NAD(+). NQR complex catalyzes the reduction of ubiquinone-1 to ubiquinol by two successive reactions, coupled with the transport of Na(+) ions from the cytoplasm to the periplasm. NqrA to NqrE are probably involved in the second step, the conversion of ubisemiquinone to ubiquinol. This Vibrio vulnificus (strain CMCP6) protein is Na(+)-translocating NADH-quinone reductase subunit E.